A 746-amino-acid polypeptide reads, in one-letter code: Polyribonucleotide nucleotidyltransferase (746 aa).

Positions 490 and 496 each coordinate Mg(2+). The 63-residue stretch at 557-619 folds into the KH domain; that stretch reads PRIETMIIGK…ATIDAAVKAI (63 aa). Positions 629-699 constitute an S1 motif domain; that stretch reads GEVYEGKISS…KTGKFKLSRK (71 aa). The tract at residues 701–746 is disordered; it reads LLPKPEGYEERPPRPERGERGPRQDRGDRGPRQDRGDRGPRREYRD. Basic and acidic residues predominate over residues 706–746; that stretch reads EGYEERPPRPERGERGPRQDRGDRGPRQDRGDRGPRREYRD.

Belongs to the polyribonucleotide nucleotidyltransferase family. Mg(2+) serves as cofactor.

Its subcellular location is the cytoplasm. It catalyses the reaction RNA(n+1) + phosphate = RNA(n) + a ribonucleoside 5'-diphosphate. Functionally, involved in mRNA degradation. Catalyzes the phosphorolysis of single-stranded polyribonucleotides processively in the 3'- to 5'-direction. This Parabacteroides distasonis (strain ATCC 8503 / DSM 20701 / CIP 104284 / JCM 5825 / NCTC 11152) protein is Polyribonucleotide nucleotidyltransferase.